We begin with the raw amino-acid sequence, 396 residues long: MTGRLFTSESVTEGHPDKIADQISDSVLDAMLELDPTSRVAVETLLTTGVVVVAGEVTTTGYVDVKDVVRRRIIEIGYDSSVKGFDGHSCGVMVAIGGQSGDIAQGVDTGHESRTGSVDAMDKQGAGDQGLMFGYACDDTDVLMPLPIVIAQRLAEQLTAVRKDGTLPYLRPDGKTQVTIEYDAENRPVRVDTVVLSSQHDEDTELDTLEADVKKHVIDPVLATFPIPSEGYRLLVNPTGRFVVGGPMGDAGLTGRKIIVDTYGGMARHGGGAFSGKDPSKVDRSAAYAMRWVAKNVVAAGLATRCEAQVAYAIGKAQPVGVFVETFGTGVVDDERIQEAVLEVFDLRPAAIIRDLDLLRPIYAKTAAYGHFGRELPEFTWERTDRADALRAAAGL.

ATP is bound at residue His-15. Asp-17 contacts Mg(2+). Position 43 (Glu-43) interacts with K(+). Residues Glu-56 and Gln-99 each coordinate L-methionine. The segment at 99–109 (QSGDIAQGVDT) is flexible loop. ATP contacts are provided by residues 173-175 (DGK), 241-242 (RF), Asp-250, 256-257 (RK), Ala-273, and Lys-277. Residue Asp-250 coordinates L-methionine. Lys-281 is an L-methionine binding site.

This sequence belongs to the AdoMet synthase family. As to quaternary structure, homotetramer; dimer of dimers. It depends on Mg(2+) as a cofactor. K(+) serves as cofactor.

The protein localises to the cytoplasm. It catalyses the reaction L-methionine + ATP + H2O = S-adenosyl-L-methionine + phosphate + diphosphate. The protein operates within amino-acid biosynthesis; S-adenosyl-L-methionine biosynthesis; S-adenosyl-L-methionine from L-methionine: step 1/1. Functionally, catalyzes the formation of S-adenosylmethionine (AdoMet) from methionine and ATP. The overall synthetic reaction is composed of two sequential steps, AdoMet formation and the subsequent tripolyphosphate hydrolysis which occurs prior to release of AdoMet from the enzyme. The sequence is that of S-adenosylmethionine synthase from Nocardioides sp. (strain ATCC BAA-499 / JS614).